An 862-amino-acid chain; its full sequence is Phosphatidic acid phosphohydrolase 1 (862 aa).

Residues 19–104 form an N-LIP region; the sequence is NPATLSGAID…VPDELLVSPV (86 aa). Disordered regions lie at residues 104–183 and 300–341; these read VMSA…SVEE and GSTL…AGSG. The segment covering 105-117 has biased composition (polar residues); that stretch reads MSATSSPPQSPET. Ser-110 and Ser-114 each carry phosphoserine. Positions 132–143 are enriched in basic and acidic residues; sequence NENKKKEKKVLE. Composition is skewed to low complexity over residues 161–179 and 300–313; these read SETT…TPPD and GSTL…PSGS. Residue Ser-168 is modified to Phosphoserine. A DXDXT motif motif is present at residues 398–402; it reads DIDGT. N6-acetyllysine is present on Lys-496. A Phosphoserine modification is found at Ser-511. Ser-602 carries the post-translational modification Phosphoserine; by CDC28. The disordered stretch occupies residues 648–732; sequence SDISNDDSDN…TPNKSTMSKG (85 aa). Acidic residues predominate over residues 651–663; the sequence is SNDDSDNIDEDTD. 2 stretches are compositionally biased toward polar residues: residues 664–679 and 687–699; these read VSQQ…NSVK and PQRN…NNNE. The segment covering 710 to 730 has biased composition (low complexity); it reads ASDLVSSHSSSGSTPNKSTMS. Thr-723 bears the Phosphothreonine; by CDC28 mark. Ser-744 bears the Phosphoserine; by CDC28 mark. Ser-748, Ser-773, and Ser-774 each carry phosphoserine. Positions 757-780 are disordered; it reads MDDEDSNYNRTKSRRASSAAATSI. The residue at position 801 (Lys-801) is an N6-acetyllysine. Positions 807–862 are disordered; sequence DVHSLGNSDTESRREQSVNETGRNQLPHNSMDDKDLDSRVSDEFDDDEFDEDEFED. Ser-810 and Ser-814 each carry phosphoserine. Thr-816 carries the phosphothreonine modification. Residues 824–834 are compositionally biased toward polar residues; the sequence is VNETGRNQLPH. The span at 836–848 shows a compositional bias: basic and acidic residues; the sequence is SMDDKDLDSRVSD. Ser-844 and Ser-847 each carry phosphoserine. The segment covering 849-862 has biased composition (acidic residues); the sequence is EFDDDEFDEDEFED.

Belongs to the lipin family. Requires Mg(2+) as cofactor. In terms of processing, acetylation at Lys-496 and Lys-801 by ESA1 promotes synthesis of diacylglycerol. Phosphorylated by CDC28 at the onset of mitosis, and dephosphorylated by the NEM1-SPO7 complex. Phosphorylation regulates recruitment on promoters of lipid biosynthetic enzymes.

The protein localises to the cytoplasm. It is found in the nucleus membrane. It localises to the endoplasmic reticulum membrane. It carries out the reaction a 1,2-diacyl-sn-glycero-3-phosphate + H2O = a 1,2-diacyl-sn-glycerol + phosphate. Its activity is regulated as follows. Phenylglyoxal and propranolol inhibit activity in dose-dependent manners with IC(50) values of 1.3 mM and 0.2 mM, respectively. Sertraline inhibits activity in a dose-dependent manner with an IC(50) value of 85 uM; the inhibitory effects of sertraline and propranolol are additive. Functionally, mg(2+)-dependent phosphatidate (PA) phosphatase which catalyzes the dephosphorylation of PA to yield diacylglycerol. Required for de novo lipid synthesis and formation of lipid droplets. Controls transcription of phospholipid biosynthetic genes and nuclear structure by regulating the amount of membrane present at the nuclear envelope. Involved in plasmid maintenance, in respiration and in cell proliferation. This is Phosphatidic acid phosphohydrolase 1 (PAH1) from Saccharomyces cerevisiae (strain ATCC 204508 / S288c) (Baker's yeast).